A 264-amino-acid polypeptide reads, in one-letter code: Short-chain dehydrogenase/reductase malC (264 aa).

Residues 13–35 form a helical membrane-spanning segment; that stretch reads GKNVLIIGGTSGIGFAVAQLVIE. Thr-22, Ser-23, Ile-25, Ser-45, Asn-46, Lys-49, Asp-75, Asn-88, Arg-130, Val-202, and Thr-204 together coordinate NADP(+). Asn-249 carries N-linked (GlcNAc...) asparagine glycosylation.

The protein belongs to the short-chain dehydrogenases/reductases (SDR) family.

Its subcellular location is the membrane. The catalysed reaction is 1-hydroxy-3-{[2-(1,1-dimethylallyl)-indol-3-yl]methyl}-6H,7H,8H-5lambda(5)-pyrrolo[1,2-a]pyrazine + NADPH + H(+) = 1-hydroxy-3-{[2-(1,1-dimethylallyl)-indol-3-yl]methyl}-4H,6H,7H,8H-pyrrolo[1,2-a]pyrazine + NADP(+). It catalyses the reaction 1-hydroxy-3-{[2-(1,1-dimethylallyl)-indol-3-yl]methyl}-4H,6H,7H,8H-pyrrolo[1,2-a]pyrazine = (+)-premalbrancheamide. It functions in the pathway alkaloid biosynthesis. Short-chain dehydrogenase/reductase; part of the gene cluster that mediates the biosynthesis of malbrancheamide, a dichlorinated fungal indole alkaloid that belongs to a family of natural products containing a characteristic bicyclo[2.2.2]diazaoctane core. The first step of malbrancheamide biosynthesis involves coupling of L-proline and L-tryptophan by malG, a bimodular NRPS, to produce L-Pro-L-Trp aldehyde through reductive offloading. This compound undergoes spontaneous cyclization and dehydration to give a dienamine which is reverse prenylated at C-2 by malE. The other prenyltransferase present in the cluster, malB, displays modest activity, suggesting that may be a redundant gene in the pathway. Subsequently, a [4+2] Diels-Alder cyclo-addition catalyzed by the bifunctional enzyme malC forms the characteristic bicyclo[2.2.2]diazaoctane ring of premalbrancheamid. The first reaction catalyzed is a NADPH-dependent reduction reaction in which the nicotinamide cofactor is a stoichiometric reagent. Either NADH or NADPH is effective as a cofactor. NADP(+) is required for stereocontrolled formation of premalbrancheamide, however it does not appear to be required as a formal stoichiometric reagent because the second reaction performed by malC, the [4+2] cycloaddition, is a balanced chemical reaction without requirement for hydride transfer to balance the reaction. Finally, the flavin-dependent halogenase malA catalyzes the iterative dichlorination of the indole ring of premalbrancheamide to yield C-9 monochlorinated malbrancheamide B, C-8 monochlorinated isomalbrancheamide B, and dichlorinated malbrancheamide. MalA is also able to brominate premalbrancheamide at C-9 to yield malbrancheamide C, and, to a lesser extend, at C-8 to yield isomalbrancheamide C. Finally, malA can brominate C-9 monochlorinated malbrancheamide B at C-8 to yield malbrancheamide D, or C-8 monochlorinated isomalbrancheamide B at C-9 to produce isomalbrancheamide D. This chain is Short-chain dehydrogenase/reductase malC, found in Malbranchea aurantiaca.